Reading from the N-terminus, the 158-residue chain is Cyclic pyranopterin monophosphate synthase (158 aa).

Residues Leu-75–His-77 and Met-113–Glu-114 contribute to the substrate site. The active site involves Asp-128.

Belongs to the MoaC family. As to quaternary structure, homohexamer; trimer of dimers.

The enzyme catalyses (8S)-3',8-cyclo-7,8-dihydroguanosine 5'-triphosphate = cyclic pyranopterin phosphate + diphosphate. It participates in cofactor biosynthesis; molybdopterin biosynthesis. Functionally, catalyzes the conversion of (8S)-3',8-cyclo-7,8-dihydroguanosine 5'-triphosphate to cyclic pyranopterin monophosphate (cPMP). This Vibrio campbellii (strain ATCC BAA-1116) protein is Cyclic pyranopterin monophosphate synthase.